Here is a 579-residue protein sequence, read N- to C-terminus: 6-deoxy-6-sulfo-D-gluconate dehydratase (579 aa).

[4Fe-4S] cluster is bound by residues C59, C127, and C200.

It belongs to the IlvD/Edd family. In terms of assembly, homodimer. [4Fe-4S] cluster serves as cofactor.

The catalysed reaction is 6-deoxy-6-sulfo-D-gluconate = 2-dehydro-3,6-dideoxy-6-sulfo-D-gluconate + H2O. Catalyzes the dehydration of 6-deoxy-6-sulfo-D-gluconate to 2-dehydro-3,6-dideoxy-6-sulfo-D-gluconate. Is involved in a degradation pathway of sulfoquinovose (SQ) that allows P.putida SQ1 to use SQ as the sole carbon and energy source for growth. This Pseudomonas putida (Arthrobacter siderocapsulatus) protein is 6-deoxy-6-sulfo-D-gluconate dehydratase.